The primary structure comprises 338 residues: Glycerol-3-phosphate dehydrogenase [NAD(P)+] (338 aa).

NADPH is bound by residues Ser13, Trp14, and Lys108. Sn-glycerol 3-phosphate contacts are provided by Lys108, Gly139, and Ser141. An NADPH-binding site is contributed by Ala143. Sn-glycerol 3-phosphate-binding residues include Lys194, Asp247, Ser257, Arg258, and Asn259. Catalysis depends on Lys194, which acts as the Proton acceptor. Arg258 lines the NADPH pocket. NADPH contacts are provided by Val282 and Glu284.

It belongs to the NAD-dependent glycerol-3-phosphate dehydrogenase family.

Its subcellular location is the cytoplasm. The catalysed reaction is sn-glycerol 3-phosphate + NAD(+) = dihydroxyacetone phosphate + NADH + H(+). It catalyses the reaction sn-glycerol 3-phosphate + NADP(+) = dihydroxyacetone phosphate + NADPH + H(+). It functions in the pathway membrane lipid metabolism; glycerophospholipid metabolism. Catalyzes the reduction of the glycolytic intermediate dihydroxyacetone phosphate (DHAP) to sn-glycerol 3-phosphate (G3P), the key precursor for phospholipid synthesis. The sequence is that of Glycerol-3-phosphate dehydrogenase [NAD(P)+] from Listeria monocytogenes serotype 4b (strain CLIP80459).